Consider the following 90-residue polypeptide: UPF0297 protein OEOE_1166 (90 aa).

Belongs to the UPF0297 family.

The sequence is that of UPF0297 protein OEOE_1166 from Oenococcus oeni (strain ATCC BAA-331 / PSU-1).